Reading from the N-terminus, the 404-residue chain is Acetate kinase (404 aa).

Residue Asn-7 coordinates Mg(2+). Lys-14 contacts ATP. Arg-95 is a binding site for substrate. Asp-152 acts as the Proton donor/acceptor in catalysis. Residues 212–216 (HLGNG), 286–288 (DMR), and 334–338 (GIGEN) each bind ATP. Position 388 (Glu-388) interacts with Mg(2+).

The protein belongs to the acetokinase family. In terms of assembly, homodimer. The cofactor is Mg(2+). Mn(2+) is required as a cofactor.

The protein localises to the cytoplasm. The catalysed reaction is acetate + ATP = acetyl phosphate + ADP. Its pathway is metabolic intermediate biosynthesis; acetyl-CoA biosynthesis; acetyl-CoA from acetate: step 1/2. Catalyzes the formation of acetyl phosphate from acetate and ATP. Can also catalyze the reverse reaction. In Lawsonia intracellularis (strain PHE/MN1-00), this protein is Acetate kinase.